Reading from the N-terminus, the 255-residue chain is Putative cysteine-rich repeat secretory protein 27 (255 aa).

A signal peptide spans 1 to 26 (MISKFGSVHILAVVAIQLLIIPSVSS). Gnk2-homologous domains follow at residues 33-135 (YLHH…TINS) and 141-252 (YEND…LYPF).

Belongs to the cysteine-rich repeat secretory protein family.

It is found in the secreted. This is Putative cysteine-rich repeat secretory protein 27 (CRRSP27) from Arabidopsis thaliana (Mouse-ear cress).